Reading from the N-terminus, the 222-residue chain is Twisted gastrulation protein homolog 1 (222 aa).

The N-terminal stretch at 1–24 (MKSHYIVLALASLTFLLCLPVSQS) is a signal peptide. 2 N-linked (GlcNAc...) asparagine glycosylation sites follow: N80 and N146.

Belongs to the twisted gastrulation protein family. Interacts with CHRD and/or BMP4. This interaction enhances CHRD/BMP4 complex formation. Interacts with BMP7. Expressed in lymph node, liver, kidney, and lung. Expression in the kidney was stronger in the medulla than in the cortex, particularly in the cells surrounding the medullary tubules. Expressed in growth plate cartilage of long bones, ribs, and digits and to a lesser extent also in the resting zone of the epiphysis, trabecular bone, and vertebral cartilage. Expression seems to be absent from other skeletal tissues including muscle, skin, and fibroblasts.

It is found in the secreted. Its function is as follows. May be involved in dorsoventral axis formation. Seems to antagonize BMP signaling by forming ternary complexes with CHRD and BMPs, thereby preventing BMPs from binding to their receptors. In addition to the anti-BMP function, also has pro-BMP activity, partly mediated by cleavage and degradation of CHRD, which releases BMPs from ternary complexes. May be an important modulator of BMP-regulated cartilage development and chondrocyte differentiation. May play a role in thymocyte development. This is Twisted gastrulation protein homolog 1 (Twsg1) from Mus musculus (Mouse).